A 226-amino-acid polypeptide reads, in one-letter code: 2-C-methyl-D-erythritol 4-phosphate cytidylyltransferase (226 aa).

Belongs to the IspD/TarI cytidylyltransferase family. IspD subfamily.

The enzyme catalyses 2-C-methyl-D-erythritol 4-phosphate + CTP + H(+) = 4-CDP-2-C-methyl-D-erythritol + diphosphate. Its pathway is isoprenoid biosynthesis; isopentenyl diphosphate biosynthesis via DXP pathway; isopentenyl diphosphate from 1-deoxy-D-xylulose 5-phosphate: step 2/6. Catalyzes the formation of 4-diphosphocytidyl-2-C-methyl-D-erythritol from CTP and 2-C-methyl-D-erythritol 4-phosphate (MEP). In Bacillus thuringiensis (strain Al Hakam), this protein is 2-C-methyl-D-erythritol 4-phosphate cytidylyltransferase.